The primary structure comprises 119 residues: Protein sigma-1-small (119 aa).

It belongs to the orthoreovirus sigma-1s protein family.

This Mammalia (T1L) protein is Protein sigma-1-small (S1).